A 609-amino-acid polypeptide reads, in one-letter code: Alpha-glycerophosphate oxidase (609 aa).

D21 to E49 lines the FAD pocket.

FAD is required as a cofactor.

Its subcellular location is the cytoplasm. The enzyme catalyses sn-glycerol 3-phosphate + O2 = dihydroxyacetone phosphate + H2O2. It participates in membrane lipid metabolism; glycerophospholipid metabolism. The sequence is that of Alpha-glycerophosphate oxidase (glpO) from Enterococcus casseliflavus (Enterococcus flavescens).